The primary structure comprises 286 residues: Shikimate dehydrogenase (NADP(+)) (286 aa).

Residues 19–21 and Thr-66 contribute to the shikimate site; that span reads SVS. Lys-70 functions as the Proton acceptor in the catalytic mechanism. Shikimate-binding residues include Asn-91 and Asp-106. NADP(+) contacts are provided by residues 130 to 134 and Ala-225; that span reads GAGGS. Tyr-227 is a binding site for shikimate. Gly-248 is an NADP(+) binding site.

This sequence belongs to the shikimate dehydrogenase family. As to quaternary structure, homodimer.

It catalyses the reaction shikimate + NADP(+) = 3-dehydroshikimate + NADPH + H(+). It participates in metabolic intermediate biosynthesis; chorismate biosynthesis; chorismate from D-erythrose 4-phosphate and phosphoenolpyruvate: step 4/7. Involved in the biosynthesis of the chorismate, which leads to the biosynthesis of aromatic amino acids. Catalyzes the reversible NADPH linked reduction of 3-dehydroshikimate (DHSA) to yield shikimate (SA). The chain is Shikimate dehydrogenase (NADP(+)) from Dehalococcoides mccartyi (strain ATCC BAA-2266 / KCTC 15142 / 195) (Dehalococcoides ethenogenes (strain 195)).